A 678-amino-acid chain; its full sequence is Photosystem I P700 chlorophyll a apoprotein A1 (678 aa).

A run of 8 helical transmembrane segments spans residues 75-98 (VFAA…FHGA), 152-175 (LKVI…FHMH), 192-216 (STHH…HISL), 266-284 (SAMH…SVLG), 302-325 (WHLV…QMSN), 341-367 (VSLF…IGLV), 384-406 (IILG…LYVH), and 458-476 (FMVT…LILV). [4Fe-4S] cluster contacts are provided by C500 and C509. Helical transmembrane passes span 516 to 537 (HVFL…HFFW) and 591 to 613 (LAAY…MFLF). Residue H602 participates in chlorophyll a' binding. The chlorophyll a site is built by M610 and Y618. W619 is a phylloquinone binding site. A helical transmembrane segment spans residues 651–671 (AVGFTHYLLGGIGSTWSFFLA).

The protein belongs to the PsaA/PsaB family. As to quaternary structure, the PsaA/B heterodimer binds the P700 chlorophyll special pair and subsequent electron acceptors. PSI consists of a core antenna complex that captures photons, and an electron transfer chain that converts photonic excitation into a charge separation. The eukaryotic PSI reaction center is composed of at least 11 subunits. P700 is a chlorophyll a/chlorophyll a' dimer, A0 is one or more chlorophyll a, A1 is one or both phylloquinones and FX is a shared 4Fe-4S iron-sulfur center. is required as a cofactor.

It localises to the plastid. It is found in the chloroplast thylakoid membrane. It catalyses the reaction reduced [plastocyanin] + hnu + oxidized [2Fe-2S]-[ferredoxin] = oxidized [plastocyanin] + reduced [2Fe-2S]-[ferredoxin]. In terms of biological role, psaA and PsaB bind P700, the primary electron donor of photosystem I (PSI), as well as the electron acceptors A0, A1 and FX. PSI is a plastocyanin/cytochrome c6-ferredoxin oxidoreductase, converting photonic excitation into a charge separation, which transfers an electron from the donor P700 chlorophyll pair to the spectroscopically characterized acceptors A0, A1, FX, FA and FB in turn. Oxidized P700 is reduced on the lumenal side of the thylakoid membrane by plastocyanin or cytochrome c6. This chain is Photosystem I P700 chlorophyll a apoprotein A1, found in Amphidinium carterae (Dinoflagellate).